Reading from the N-terminus, the 481-residue chain is PTS system N-acetylmuramic acid-specific EIIBC component (481 aa).

The 89-residue stretch at 1–89 folds into the PTS EIIB type-1 domain; sequence MAKITQTMMA…NALIESGDNV (89 aa). C28 serves as the catalytic Phosphocysteine intermediate; for EIIB activity. A PTS EIIC type-1 domain is found at 122–481; that stretch reads SKFATIFTPL…FFGCKDVDLS (360 aa). 10 helical membrane-spanning segments follow: residues 124-144, 165-185, 190-210, 225-245, 263-283, 307-327, 342-362, 376-396, 406-426, and 448-468; these read FATI…LLGI, LVAY…ILIG, QAFG…VLGY, FFGF…AAIL, MILT…LIIM, AAIL…QGFV, LFPI…ALYA, GAII…VTLP, IGGA…LPVG, and IFAG…VGFA.

The protein resides in the cell inner membrane. The enzyme catalyses N-acetyl-beta-D-muramate(out) + N(pros)-phospho-L-histidyl-[protein] = N-acetyl-beta-D-muramate 6-phosphate(in) + L-histidyl-[protein]. In terms of biological role, the phosphoenolpyruvate-dependent sugar phosphotransferase system (sugar PTS), a major carbohydrate active transport system, catalyzes the phosphorylation of incoming sugar substrates concomitantly with their translocation across the cell membrane. This system is involved in N-acetylmuramic acid (MurNAc) transport, yielding cytoplasmic MurNAc-6-P. Is also able to take up anhydro-N-acetylmuramic acid (anhMurNAc), but cannot phosphorylate the carbon 6, probably because of the 1,6-anhydro ring. The polypeptide is PTS system N-acetylmuramic acid-specific EIIBC component (murP) (Vibrio cholerae serotype O1 (strain ATCC 39315 / El Tor Inaba N16961)).